Reading from the N-terminus, the 150-residue chain is Macrodomain Ter protein (150 aa).

Belongs to the MatP family. As to quaternary structure, homodimer.

It is found in the cytoplasm. Functionally, required for spatial organization of the terminus region of the chromosome (Ter macrodomain) during the cell cycle. Prevents early segregation of duplicated Ter macrodomains during cell division. Binds specifically to matS, which is a 13 bp signature motif repeated within the Ter macrodomain. The polypeptide is Macrodomain Ter protein (Klebsiella pneumoniae (strain 342)).